The sequence spans 1035 residues: MAKKRVYELAKELNTTSKRLMEKLEEINIVVKNHMSFLEEDELEALYDHIGVIRHKDDKSNTDDNKTASAHSVAQHSSEAMKELKKEAKKAPRIIRTTEIYLDSKDEEIKEIKANDAKSQKKPEEKRKKNDFVRVETETSGLRPGLVRETKPEYMRILEEQKKSEASKAQTNEKKDAEKNSVKEVVKKEEGSKQTAEIKDGSVNMEGKVLEEVKATVADSATNVNLNESIDKDKKTNDNRQVSTDNSAVNNEENAADTLNKKDMDKKNNNKKNEAKKNAEKKNEAKKNEKNDNKGGNAKKNEHRSPDMKKNDSNRPQDANKQNSKAAADKNREEGRTGSKKSLEIPKVELTTSQKEEFNSQRAERREYNKDAEKDSKRELRKEQPRSAISGGRNKNHKVIKNVFNSRKGVSEVLSDDFEMDDFYFGGSKKSRKIKKKKEEKKEEKPAPPKPVVTSIKIAAPITVKELAEALKKTSAEVIKKLMSLGIMATLNQELDFDTAAIVADEFGVKAEEEVVVNEEDILFDDSDDPNDPEAVPRPPVVVVMGHVDHGKTSLLDAIKKTNVTEKEAGGITQHIGAYMVKINNRNITFLDTPGHEAFTAMRARGAQVTDIAVLVVAADDGVMPQTIEAINHAKAANVTIIVAINKIDKPTANPEKVKQELTEYGLIPEEWGGDTIFVEVSAKKGVNIDYLLEMILLAADMLELKANPNKQAKGTVIEAKLDKDKGPVATVLVQRGTLCVGDSIIVGTTTGRIRAMTDDKGHRIKKAGPSTPVEILGLHEVPEAGETFYVITDEKTAKQLIEKRKLKQREQLLKASARVTLDDLFNQIKEGKVKELNIIVKADVQGSVEALKQSLEKLSNDEVRVKIIHGGVGSVTETDVTLAQVSNAIIIGFNVRPPANVIDAAKKAGVDLRLYTIIYNAIEDIEAAMKGMLEPTYKEVVIGHVEIRQIFKVSGVGTVGGGYVTDGKITRNANIRLVRDGIVVHEGKLGSLKRFKDDVREVAEGYECGLSIEKFNDIKEGDVVEVYVMEEVKE.

A compositionally biased stretch (basic and acidic residues) spans 56-66 (KDDKSNTDDNK). 2 disordered regions span residues 56–80 (KDDK…SSEA) and 114–402 (ANDA…VIKN). Polar residues predominate over residues 68–78 (ASAHSVAQHSS). Basic and acidic residues-rich tracts occupy residues 114–137 (ANDA…RVET) and 146–200 (LVRE…EIKD). Residues 219–228 (DSATNVNLNE) are compositionally biased toward polar residues. Over residues 229-238 (SIDKDKKTND) the composition is skewed to basic and acidic residues. A compositionally biased stretch (polar residues) spans 239-253 (NRQVSTDNSAVNNEE). The segment covering 259-315 (LNKKDMDKKNNNKKNEAKKNAEKKNEAKKNEKNDNKGGNAKKNEHRSPDMKKNDSNR) has biased composition (basic and acidic residues). Residues 316–325 (PQDANKQNSK) are compositionally biased toward polar residues. Composition is skewed to basic and acidic residues over residues 327 to 347 (AADK…EIPK) and 354 to 385 (QKEE…KEQP). The tr-type G domain occupies 537–706 (PRPPVVVVMG…LLAADMLELK (170 aa)). The interval 546–553 (GHVDHGKT) is G1. Residue 546-553 (GHVDHGKT) coordinates GTP. The G2 stretch occupies residues 571–575 (GITQH). Positions 592–595 (DTPG) are G3. Residues 592 to 596 (DTPGH) and 646 to 649 (NKID) contribute to the GTP site. The G4 stretch occupies residues 646–649 (NKID). The tract at residues 682 to 684 (SAK) is G5.

It belongs to the TRAFAC class translation factor GTPase superfamily. Classic translation factor GTPase family. IF-2 subfamily.

The protein localises to the cytoplasm. Its function is as follows. One of the essential components for the initiation of protein synthesis. Protects formylmethionyl-tRNA from spontaneous hydrolysis and promotes its binding to the 30S ribosomal subunits. Also involved in the hydrolysis of GTP during the formation of the 70S ribosomal complex. This is Translation initiation factor IF-2 from Acetivibrio thermocellus (strain ATCC 27405 / DSM 1237 / JCM 9322 / NBRC 103400 / NCIMB 10682 / NRRL B-4536 / VPI 7372) (Clostridium thermocellum).